The following is a 292-amino-acid chain: Cyclin-dependent kinase 5 homolog (292 aa).

The Protein kinase domain occupies 4–285 (YSKIEKLGEG…AAAALKHPYF (282 aa)). Residues 10-18 (LGEGTYGIV) and Lys-33 contribute to the ATP site. Thr-14 is modified (phosphothreonine). The residue at position 15 (Tyr-15) is a Phosphotyrosine. The active-site Proton acceptor is the Asp-126.

The protein belongs to the protein kinase superfamily. CMGC Ser/Thr protein kinase family. CDC2/CDKX subfamily.

The enzyme catalyses L-seryl-[protein] + ATP = O-phospho-L-seryl-[protein] + ADP + H(+). The catalysed reaction is L-threonyl-[protein] + ATP = O-phospho-L-threonyl-[protein] + ADP + H(+). Its activity is regulated as follows. Phosphorylation at Thr-14 or Tyr-15 inactivates the enzyme. The polypeptide is Cyclin-dependent kinase 5 homolog (cdk5) (Dictyostelium discoideum (Social amoeba)).